The sequence spans 158 residues: 6,7-dimethyl-8-ribityllumazine synthase (158 aa).

5-amino-6-(D-ribitylamino)uracil-binding positions include F22, 57–59 (AVE), and 81–83 (AVI). A (2S)-2-hydroxy-3-oxobutyl phosphate-binding site is contributed by 86-87 (GT). The Proton donor role is filled by H89. F114 is a binding site for 5-amino-6-(D-ribitylamino)uracil. R128 is a (2S)-2-hydroxy-3-oxobutyl phosphate binding site.

The protein belongs to the DMRL synthase family. Forms an icosahedral capsid composed of 60 subunits, arranged as a dodecamer of pentamers.

It catalyses the reaction (2S)-2-hydroxy-3-oxobutyl phosphate + 5-amino-6-(D-ribitylamino)uracil = 6,7-dimethyl-8-(1-D-ribityl)lumazine + phosphate + 2 H2O + H(+). It participates in cofactor biosynthesis; riboflavin biosynthesis; riboflavin from 2-hydroxy-3-oxobutyl phosphate and 5-amino-6-(D-ribitylamino)uracil: step 1/2. Catalyzes the formation of 6,7-dimethyl-8-ribityllumazine by condensation of 5-amino-6-(D-ribitylamino)uracil with 3,4-dihydroxy-2-butanone 4-phosphate. This is the penultimate step in the biosynthesis of riboflavin. This is 6,7-dimethyl-8-ribityllumazine synthase from Shewanella halifaxensis (strain HAW-EB4).